A 276-amino-acid polypeptide reads, in one-letter code: Diaminopimelate epimerase (276 aa).

N13, Q46, and N66 together coordinate substrate. The active-site Proton donor is C75. Residues 76-77 (GN), N159, N192, and 210-211 (ER) each bind substrate. The active-site Proton acceptor is C219. 220–221 (GT) is a binding site for substrate.

Belongs to the diaminopimelate epimerase family. As to quaternary structure, homodimer.

It localises to the cytoplasm. The enzyme catalyses (2S,6S)-2,6-diaminopimelate = meso-2,6-diaminopimelate. It participates in amino-acid biosynthesis; L-lysine biosynthesis via DAP pathway; DL-2,6-diaminopimelate from LL-2,6-diaminopimelate: step 1/1. In terms of biological role, catalyzes the stereoinversion of LL-2,6-diaminopimelate (L,L-DAP) to meso-diaminopimelate (meso-DAP), a precursor of L-lysine and an essential component of the bacterial peptidoglycan. The protein is Diaminopimelate epimerase of Azotobacter vinelandii (strain DJ / ATCC BAA-1303).